The primary structure comprises 255 residues: Small ribosomal subunit protein uS2 (255 aa).

Positions 230–255 are disordered; that stretch reads QSSSGRDLGASSEVPVEPALEEAAEG.

Belongs to the universal ribosomal protein uS2 family.

This is Small ribosomal subunit protein uS2 from Rhizobium leguminosarum bv. trifolii (strain WSM2304).